The primary structure comprises 327 residues: MKTIFSGIQPSGTLTLGNYLGAIQQFVELQNDYNCYFCIVDEHAITVPQDRLELRKNIKSLAALYIASGIDPDSSTLFIQSEVPEHTQLGWMLQSISYVGELERMTQYKDKSQGQEAISSALLTYPSLMAADILLYNTDVVPVGDDQKQHLELARNLAQRFNNRFNDIFTVPEVRIPKVGARIMSLQEPTKKMSKSDTNQKGFISMLDEPKRIEKKIKSAVTDSEGIVKFDKENKPGVSNLLTIYSSCTGESIADLEKKYDGKGYGDFKQGVANAVIDTLRPIQEKYEQLIQSDELDAILDQGRDKASFSAGKTIKKAKKAMGLGRK.

ATP is bound by residues 9 to 11 and 17 to 18; these read QPS and GN. A 'HIGH' region motif is present at residues 10-18; sequence PSGTLTLGN. Asp-132 contacts L-tryptophan. ATP contacts are provided by residues 144-146, Ile-183, and 192-196; these read GDD and KMSKS. The 'KMSKS' region motif lies at 192–196; the sequence is KMSKS.

It belongs to the class-I aminoacyl-tRNA synthetase family. Homodimer.

It localises to the cytoplasm. The enzyme catalyses tRNA(Trp) + L-tryptophan + ATP = L-tryptophyl-tRNA(Trp) + AMP + diphosphate + H(+). In terms of biological role, catalyzes the attachment of tryptophan to tRNA(Trp). The protein is Tryptophan--tRNA ligase of Oceanobacillus iheyensis (strain DSM 14371 / CIP 107618 / JCM 11309 / KCTC 3954 / HTE831).